Consider the following 288-residue polypeptide: 2-dehydro-3-deoxyphosphooctonate aldolase (288 aa).

This sequence belongs to the KdsA family.

It localises to the cytoplasm. It carries out the reaction D-arabinose 5-phosphate + phosphoenolpyruvate + H2O = 3-deoxy-alpha-D-manno-2-octulosonate-8-phosphate + phosphate. Its pathway is carbohydrate biosynthesis; 3-deoxy-D-manno-octulosonate biosynthesis; 3-deoxy-D-manno-octulosonate from D-ribulose 5-phosphate: step 2/3. It participates in bacterial outer membrane biogenesis; lipopolysaccharide biosynthesis. The protein is 2-dehydro-3-deoxyphosphooctonate aldolase of Bdellovibrio bacteriovorus (strain ATCC 15356 / DSM 50701 / NCIMB 9529 / HD100).